The following is a 417-amino-acid chain: Serine hydroxymethyltransferase (417 aa).

(6S)-5,6,7,8-tetrahydrofolate is bound by residues Leu121 and Gly125–Leu127. Lys229 bears the N6-(pyridoxal phosphate)lysine mark. A (6S)-5,6,7,8-tetrahydrofolate-binding site is contributed by Ser355–Phe357.

The protein belongs to the SHMT family. In terms of assembly, homodimer. Pyridoxal 5'-phosphate serves as cofactor.

The protein localises to the cytoplasm. It catalyses the reaction (6R)-5,10-methylene-5,6,7,8-tetrahydrofolate + glycine + H2O = (6S)-5,6,7,8-tetrahydrofolate + L-serine. The protein operates within one-carbon metabolism; tetrahydrofolate interconversion. Its pathway is amino-acid biosynthesis; glycine biosynthesis; glycine from L-serine: step 1/1. Functionally, catalyzes the reversible interconversion of serine and glycine with tetrahydrofolate (THF) serving as the one-carbon carrier. This reaction serves as the major source of one-carbon groups required for the biosynthesis of purines, thymidylate, methionine, and other important biomolecules. Also exhibits THF-independent aldolase activity toward beta-hydroxyamino acids, producing glycine and aldehydes, via a retro-aldol mechanism. The sequence is that of Serine hydroxymethyltransferase from Baumannia cicadellinicola subsp. Homalodisca coagulata.